Here is a 138-residue protein sequence, read N- to C-terminus: ATP synthase epsilon chain (138 aa).

It belongs to the ATPase epsilon chain family. As to quaternary structure, F-type ATPases have 2 components, CF(1) - the catalytic core - and CF(0) - the membrane proton channel. CF(1) has five subunits: alpha(3), beta(3), gamma(1), delta(1), epsilon(1). CF(0) has three main subunits: a, b and c.

It is found in the cell membrane. Produces ATP from ADP in the presence of a proton gradient across the membrane. The protein is ATP synthase epsilon chain of Polynucleobacter asymbioticus (strain DSM 18221 / CIP 109841 / QLW-P1DMWA-1) (Polynucleobacter necessarius subsp. asymbioticus).